The following is a 438-amino-acid chain: Glutaryl-CoA dehydrogenase, mitochondrial (438 aa).

A mitochondrion-targeting transit peptide spans 1–44; that stretch reads MALRGVSVRLLSRGPGLHVLRTWVSSAAQTEKGGRTQSQLAKSS. Substrate contacts are provided by residues 138–139 and Ser-186; that span reads RS. Residues 177 to 186 and 212 to 214 contribute to the FAD site; these read FGLTEPNSGS and WIT. Lys-240 is subject to N6-acetyllysine. A substrate-binding site is contributed by 287-294; sequence FGCLNNAR. Residues Arg-319, Gln-330, and 387-391 contribute to the FAD site; that span reads DMLGG. The active-site Proton acceptor is the Glu-414. Substrate is bound at residue Gly-415. Residues 416–418 and Phe-434 contribute to the FAD site; that span reads THD.

The protein belongs to the acyl-CoA dehydrogenase family. In terms of assembly, homotetramer. It depends on FAD as a cofactor. Isoform Long and isoform Short are expressed in fibroblasts and liver.

It is found in the mitochondrion matrix. It carries out the reaction glutaryl-CoA + oxidized [electron-transfer flavoprotein] + 2 H(+) = (2E)-butenoyl-CoA + reduced [electron-transfer flavoprotein] + CO2. The protein operates within amino-acid metabolism; lysine degradation. It functions in the pathway amino-acid metabolism; tryptophan metabolism. With respect to regulation, strongly inhibited by MCPA-CoA, a metabolite of hypoglycin which is present in unripened fruit of the ackee tree. Its function is as follows. Catalyzes the oxidative decarboxylation of glutaryl-CoA to crotonyl-CoA and CO(2) in the degradative pathway of L-lysine, L-hydroxylysine, and L-tryptophan metabolism. It uses electron transfer flavoprotein as its electron acceptor. Isoform Short is inactive. This Homo sapiens (Human) protein is Glutaryl-CoA dehydrogenase, mitochondrial (GCDH).